Reading from the N-terminus, the 103-residue chain is Small ribosomal subunit protein uS10 (103 aa).

This sequence belongs to the universal ribosomal protein uS10 family. Part of the 30S ribosomal subunit.

In terms of biological role, involved in the binding of tRNA to the ribosomes. This chain is Small ribosomal subunit protein uS10, found in Novosphingobium aromaticivorans (strain ATCC 700278 / DSM 12444 / CCUG 56034 / CIP 105152 / NBRC 16084 / F199).